The primary structure comprises 360 residues: Geranylgeranyl pyrophosphate synthase 9, chloroplastic (360 aa).

Residues methionine 1–serine 39 constitute a chloroplast transit peptide. Isopentenyl diphosphate-binding residues include lysine 106, arginine 109, and histidine 138. Mg(2+)-binding residues include aspartate 145 and aspartate 151. Arginine 156 is a dimethylallyl diphosphate binding site. Arginine 157 is a binding site for isopentenyl diphosphate. Positions 245, 246, 283, 300, and 310 each coordinate dimethylallyl diphosphate.

The protein belongs to the FPP/GGPP synthase family. Monomer. No interactions with GGR. Requires Mg(2+) as cofactor.

It localises to the plastid. It is found in the chloroplast. It carries out the reaction isopentenyl diphosphate + dimethylallyl diphosphate = (2E)-geranyl diphosphate + diphosphate. The catalysed reaction is isopentenyl diphosphate + (2E)-geranyl diphosphate = (2E,6E)-farnesyl diphosphate + diphosphate. The enzyme catalyses isopentenyl diphosphate + (2E,6E)-farnesyl diphosphate = (2E,6E,10E)-geranylgeranyl diphosphate + diphosphate. It functions in the pathway isoprenoid biosynthesis; farnesyl diphosphate biosynthesis; farnesyl diphosphate from geranyl diphosphate and isopentenyl diphosphate: step 1/1. The protein operates within isoprenoid biosynthesis; geranyl diphosphate biosynthesis; geranyl diphosphate from dimethylallyl diphosphate and isopentenyl diphosphate: step 1/1. Its pathway is isoprenoid biosynthesis; geranylgeranyl diphosphate biosynthesis; geranylgeranyl diphosphate from farnesyl diphosphate and isopentenyl diphosphate: step 1/1. Its function is as follows. Catalyzes the trans-addition of the three molecules of IPP onto DMAPP to form geranylgeranyl pyrophosphate. The polypeptide is Geranylgeranyl pyrophosphate synthase 9, chloroplastic (GGPPS9) (Arabidopsis thaliana (Mouse-ear cress)).